We begin with the raw amino-acid sequence, 247 residues long: DNA polymerase sliding clamp (247 aa).

Belongs to the PCNA family. Homotrimer. The subunits circularize to form a toroid; DNA passes through its center. Replication factor C (RFC) is required to load the toroid on the DNA.

Sliding clamp subunit that acts as a moving platform for DNA processing. Responsible for tethering the catalytic subunit of DNA polymerase and other proteins to DNA during high-speed replication. The chain is DNA polymerase sliding clamp from Halobacterium salinarum (strain ATCC 29341 / DSM 671 / R1).